A 188-amino-acid polypeptide reads, in one-letter code: UPF0398 protein ABC2016 (188 aa).

The protein belongs to the UPF0398 family.

This chain is UPF0398 protein ABC2016, found in Shouchella clausii (strain KSM-K16) (Alkalihalobacillus clausii).